The sequence spans 384 residues: Galactokinase (384 aa).

Residue Glu34–Asp37 participates in substrate binding. An ATP-binding site is contributed by Ser123–Ser129. 2 residues coordinate Mg(2+): Ser129 and Glu161. The active-site Proton acceptor is the Asp173. Tyr222 contributes to the substrate binding site.

The protein belongs to the GHMP kinase family. GalK subfamily.

It localises to the cytoplasm. The catalysed reaction is alpha-D-galactose + ATP = alpha-D-galactose 1-phosphate + ADP + H(+). It participates in carbohydrate metabolism; galactose metabolism. Its function is as follows. Catalyzes the transfer of the gamma-phosphate of ATP to D-galactose to form alpha-D-galactose-1-phosphate (Gal-1-P). The sequence is that of Galactokinase from Actinobacillus pleuropneumoniae serotype 3 (strain JL03).